Reading from the N-terminus, the 425-residue chain is CinA-like protein (425 aa).

This sequence belongs to the CinA family.

This Shewanella sp. (strain ANA-3) protein is CinA-like protein.